The chain runs to 302 residues: Aspartate carbamoyltransferase catalytic subunit (302 aa).

Carbamoyl phosphate-binding residues include arginine 53 and threonine 54. An L-aspartate-binding site is contributed by lysine 82. Residues arginine 103, histidine 131, and glutamine 134 each coordinate carbamoyl phosphate. L-aspartate-binding residues include arginine 164 and arginine 223. Residues leucine 260 and proline 261 each contribute to the carbamoyl phosphate site.

The protein belongs to the aspartate/ornithine carbamoyltransferase superfamily. ATCase family. In terms of assembly, heterooligomer of catalytic and regulatory chains.

The enzyme catalyses carbamoyl phosphate + L-aspartate = N-carbamoyl-L-aspartate + phosphate + H(+). It functions in the pathway pyrimidine metabolism; UMP biosynthesis via de novo pathway; (S)-dihydroorotate from bicarbonate: step 2/3. Functionally, catalyzes the condensation of carbamoyl phosphate and aspartate to form carbamoyl aspartate and inorganic phosphate, the committed step in the de novo pyrimidine nucleotide biosynthesis pathway. In Methanococcus maripaludis (strain C5 / ATCC BAA-1333), this protein is Aspartate carbamoyltransferase catalytic subunit.